We begin with the raw amino-acid sequence, 134 residues long: Aspartate 1-decarboxylase (134 aa).

Ser25 (schiff-base intermediate with substrate; via pyruvic acid) is an active-site residue. At Ser25 the chain carries Pyruvic acid (Ser). Thr57 serves as a coordination point for substrate. Tyr58 functions as the Proton donor in the catalytic mechanism. 73 to 75 (GAA) contributes to the substrate binding site.

It belongs to the PanD family. As to quaternary structure, heterooctamer of four alpha and four beta subunits. It depends on pyruvate as a cofactor. In terms of processing, is synthesized initially as an inactive proenzyme, which is activated by self-cleavage at a specific serine bond to produce a beta-subunit with a hydroxyl group at its C-terminus and an alpha-subunit with a pyruvoyl group at its N-terminus.

It localises to the cytoplasm. It catalyses the reaction L-aspartate + H(+) = beta-alanine + CO2. It functions in the pathway cofactor biosynthesis; (R)-pantothenate biosynthesis; beta-alanine from L-aspartate: step 1/1. Its function is as follows. Catalyzes the pyruvoyl-dependent decarboxylation of aspartate to produce beta-alanine. This chain is Aspartate 1-decarboxylase, found in Sulfurihydrogenibium sp. (strain YO3AOP1).